Reading from the N-terminus, the 403-residue chain is Putative F-box protein At5g41500 (403 aa).

The 46-residue stretch at 2 to 47 (ATTISNLPRELIEEILSRVPLRAMKAMRLTCKSWNNLSKSESFMKM) folds into the F-box domain.

The sequence is that of Putative F-box protein At5g41500 from Arabidopsis thaliana (Mouse-ear cress).